Here is a 517-residue protein sequence, read N- to C-terminus: MKKFKINYLLIGIVTLLLAAALWPSIPWFGKAENRIAAIQSRGELRVSTLDSPLTYNNVNGKIIGLDYELAQQFADYLGVKLKITVRQNISQLFDDLDNDDADLLAAGLVYNSERSKNYQPGPTYYSVSQQVVYRVGGVRPRTMATLNDQQLTVAPGHVVIDDLRALKEKKYPDLSWKVDEKLGTTALLEQVKDKKLAYTIADSVAISFFQRVHPEIAVALDVTDEQPVTWFSPLDDDQTLSAAILDFFNSMNEEGTLARLEEKYLGHGGDFDYVDTRSFLRAVDSVLPDLQPLFEKYAEEIDWRLLAAISYQESHWDAQATSPTGVRGLMMLTKNTAQSLGLTDRTDAEQSISGGARYLQDMMAKVPDTVPEEERIWFALAAYNMGYAHMLDARALTAKTKGNPDSWSDVKQRLPLLSQKPLYNKLTYGYARGHEAYAYVENIRKYQISLVGYLMEKEKEVTKAKQIAQSYPVVSPHELNHPATTSILPFVAFSADGAFERNHLIAPNTLVQAPRR.

Positions 1–32 (MKKFKINYLLIGIVTLLLAAALWPSIPWFGKA) are cleaved as a signal peptide. The non-LT domain stretch occupies residues 33 to 269 (ENRIAAIQSR…RLEEKYLGHG (237 aa)). Residues 270–517 (GDFDYVDTRS…PNTLVQAPRR (248 aa)) are LT domain. The active site involves glutamate 314.

This sequence in the N-terminal section; belongs to the bacterial solute-binding protein 3 family. In the C-terminal section; belongs to the transglycosylase Slt family.

The protein resides in the cell outer membrane. The catalysed reaction is Exolytic cleavage of the (1-&gt;4)-beta-glycosidic linkage between N-acetylmuramic acid (MurNAc) and N-acetylglucosamine (GlcNAc) residues in peptidoglycan, from either the reducing or the non-reducing ends of the peptidoglycan chains, with concomitant formation of a 1,6-anhydrobond in the MurNAc residue.. Its function is as follows. Murein-degrading enzyme that degrades murein glycan strands and insoluble, high-molecular weight murein sacculi, with the concomitant formation of a 1,6-anhydromuramoyl product. Lytic transglycosylases (LTs) play an integral role in the metabolism of the peptidoglycan (PG) sacculus. Their lytic action creates space within the PG sacculus to allow for its expansion as well as for the insertion of various structures such as secretion systems and flagella. The sequence is that of Membrane-bound lytic murein transglycosylase F from Enterobacter sp. (strain 638).